The primary structure comprises 438 residues: Forkhead box protein J1 (438 aa).

A DNA-binding region (fork-head) is located at residues 123–217; sequence KPPYSYATLI…MNGAMKKRRL (95 aa).

The protein belongs to the FOXJ1 family.

Its subcellular location is the nucleus. In terms of biological role, key transcription factor required for motile ciliogenesis. Activates genes essential for motile cilia formation and function. This Xenopus tropicalis (Western clawed frog) protein is Forkhead box protein J1.